We begin with the raw amino-acid sequence, 2081 residues long: RNA1 polyprotein (2081 aa).

Helical transmembrane passes span 481–501 (ILLL…IYSV) and 515–535 (ISLG…LFNS). One can recognise an SF3 helicase domain in the interval 714–881 (LKEDHTQLQL…PGVEPGPRGV (168 aa)). Residue 741–748 (GDSGVGKS) participates in ATP binding. The segment at 877 to 900 (GPRGVDNLEFSEMDNRDSNGEPAY) is disordered. The 223-residue stretch at 1166–1388 (GAEIPEALEA…ALYADIPHEF (223 aa)) folds into the Peptidase C3 domain. Active-site for picornain 3C-like protease activity residues include histidine 1210, glutamate 1255, and cysteine 1348. The region spanning 1679–1810 (ANHFTGDYSG…SVATPVASVY (132 aa)) is the RdRp catalytic domain.

It localises to the host membrane. The enzyme catalyses RNA(n) + a ribonucleoside 5'-triphosphate = RNA(n+1) + diphosphate. Its function is as follows. Picornain 3C-like protease is a thiol protease that probably cleaves the polyprotein. This chain is RNA1 polyprotein, found in Citrus unshiu (Satsuma mandarin).